The primary structure comprises 93 residues: YcgL domain-containing protein VV1058 (93 aa).

A YcgL domain is found at 1–84 (MLCSIYKSSK…PPENLLQQHK (84 aa)). The segment at 74 to 93 (PPPENLLQQHKERKAQQKND) is disordered.

This chain is YcgL domain-containing protein VV1058, found in Vibrio vulnificus (strain YJ016).